A 146-amino-acid polypeptide reads, in one-letter code: Large ribosomal subunit protein uL15 (146 aa).

The segment covering Met-1–Arg-13 has biased composition (basic and acidic residues). Residues Met-1 to Met-55 are disordered. Gly residues predominate over residues Thr-23 to Gln-35.

Belongs to the universal ribosomal protein uL15 family. In terms of assembly, part of the 50S ribosomal subunit.

Its function is as follows. Binds to the 23S rRNA. In Lactobacillus helveticus (strain DPC 4571), this protein is Large ribosomal subunit protein uL15.